The chain runs to 181 residues: Der GTPase-activating protein YihI (181 aa).

Disordered stretches follow at residues 1-75 and 145-181; these read MSRK…KKIP and EPEAEEEFEDEAPVRKSRSDDDLLADFEDFDMDDYKG. Residues 32-43 are compositionally biased toward basic residues; that stretch reads RLRKKDKKRKGL. A compositionally biased stretch (acidic residues) spans 146–155; it reads PEAEEEFEDE. Positions 156 to 165 are enriched in basic and acidic residues; the sequence is APVRKSRSDD. The segment covering 166–181 has biased composition (acidic residues); it reads DLLADFEDFDMDDYKG.

Belongs to the YihI family. As to quaternary structure, interacts with Der.

Functionally, a GTPase-activating protein (GAP) that modifies Der/EngA GTPase function. May play a role in ribosome biogenesis. This Vibrio vulnificus (strain YJ016) protein is Der GTPase-activating protein YihI.